We begin with the raw amino-acid sequence, 271 residues long: Glutamate racemase (271 aa).

Substrate-binding positions include 10 to 11 and 42 to 43; these read DS and YG. Catalysis depends on cysteine 74, which acts as the Proton donor/acceptor. 75–76 contacts substrate; sequence NT. Catalysis depends on cysteine 189, which acts as the Proton donor/acceptor. Residue 190 to 191 participates in substrate binding; that stretch reads TH.

Belongs to the aspartate/glutamate racemases family.

The enzyme catalyses L-glutamate = D-glutamate. Its pathway is cell wall biogenesis; peptidoglycan biosynthesis. In terms of biological role, provides the (R)-glutamate required for cell wall biosynthesis. This Bartonella bacilliformis (strain ATCC 35685 / KC583 / Herrer 020/F12,63) protein is Glutamate racemase.